A 378-amino-acid polypeptide reads, in one-letter code: Queuine tRNA-ribosyltransferase (378 aa).

Asp-92 serves as the catalytic Proton acceptor. Substrate contacts are provided by residues 92-96 (DSGGF), Asp-146, Gln-188, and Gly-215. An RNA binding region spans residues 246–252 (GVGTHLE). Catalysis depends on Asp-265, which acts as the Nucleophile. The interval 270–274 (TRLAR) is RNA binding; important for wobble base 34 recognition. Residues Cys-303, Cys-305, Cys-308, and His-334 each coordinate Zn(2+).

Belongs to the queuine tRNA-ribosyltransferase family. Homodimer. Within each dimer, one monomer is responsible for RNA recognition and catalysis, while the other monomer binds to the replacement base PreQ1. Zn(2+) is required as a cofactor.

It carries out the reaction 7-aminomethyl-7-carbaguanine + guanosine(34) in tRNA = 7-aminomethyl-7-carbaguanosine(34) in tRNA + guanine. Its pathway is tRNA modification; tRNA-queuosine biosynthesis. Functionally, catalyzes the base-exchange of a guanine (G) residue with the queuine precursor 7-aminomethyl-7-deazaguanine (PreQ1) at position 34 (anticodon wobble position) in tRNAs with GU(N) anticodons (tRNA-Asp, -Asn, -His and -Tyr). Catalysis occurs through a double-displacement mechanism. The nucleophile active site attacks the C1' of nucleotide 34 to detach the guanine base from the RNA, forming a covalent enzyme-RNA intermediate. The proton acceptor active site deprotonates the incoming PreQ1, allowing a nucleophilic attack on the C1' of the ribose to form the product. After dissociation, two additional enzymatic reactions on the tRNA convert PreQ1 to queuine (Q), resulting in the hypermodified nucleoside queuosine (7-(((4,5-cis-dihydroxy-2-cyclopenten-1-yl)amino)methyl)-7-deazaguanosine). This is Queuine tRNA-ribosyltransferase from Thermosynechococcus vestitus (strain NIES-2133 / IAM M-273 / BP-1).